We begin with the raw amino-acid sequence, 492 residues long: Forkhead box protein O6 (492 aa).

Disordered regions lie at residues Met-1–Pro-76, Ser-163–Ala-235, Gly-315–Pro-338, and Phe-466–Gly-492. The segment at residues Trp-88–Ala-182 is a DNA-binding region (fork-head). Ser-184 carries the phosphoserine modification. Positions Leu-192 to Gln-203 are enriched in basic residues. Residues Pro-225 to Ala-235 show a composition bias toward low complexity. A compositionally biased stretch (pro residues) spans Leu-472–Asn-486.

In terms of processing, phosphorylation of Ser-184 is be important in regulating the transacriptional activity.

The protein localises to the cytoplasm. Its subcellular location is the nucleus. Functionally, transcriptional activator. The polypeptide is Forkhead box protein O6 (FOXO6) (Homo sapiens (Human)).